The sequence spans 353 residues: Quinolinate synthase (353 aa).

Positions 47 and 68 each coordinate iminosuccinate. Position 113 (Cys113) interacts with [4Fe-4S] cluster. Iminosuccinate contacts are provided by residues 139–141 (YAN) and Ser156. Residue Cys200 participates in [4Fe-4S] cluster binding. Residues 226–228 (HPE) and Thr243 each bind iminosuccinate. Cys297 serves as a coordination point for [4Fe-4S] cluster.

Belongs to the quinolinate synthase family. Type 1 subfamily. It depends on [4Fe-4S] cluster as a cofactor.

It is found in the cytoplasm. The catalysed reaction is iminosuccinate + dihydroxyacetone phosphate = quinolinate + phosphate + 2 H2O + H(+). It participates in cofactor biosynthesis; NAD(+) biosynthesis; quinolinate from iminoaspartate: step 1/1. Its function is as follows. Catalyzes the condensation of iminoaspartate with dihydroxyacetone phosphate to form quinolinate. In Photobacterium profundum (strain SS9), this protein is Quinolinate synthase.